Reading from the N-terminus, the 107-residue chain is NADH-quinone oxidoreductase subunit K (107 aa).

Helical transmembrane passes span 11-31, 36-56, and 67-87; these read LTHYLVLAALLFVMGMAGVLL, IVLLMSIELMLNSVNLTFVAF, and IMVFFVMTIAAAEAAVGLALA.

The protein belongs to the complex I subunit 4L family. As to quaternary structure, NDH-1 is composed of 14 different subunits. Subunits NuoA, H, J, K, L, M, N constitute the membrane sector of the complex.

Its subcellular location is the cell inner membrane. The enzyme catalyses a quinone + NADH + 5 H(+)(in) = a quinol + NAD(+) + 4 H(+)(out). Functionally, NDH-1 shuttles electrons from NADH, via FMN and iron-sulfur (Fe-S) centers, to quinones in the respiratory chain. The immediate electron acceptor for the enzyme in this species is believed to be ubiquinone. Couples the redox reaction to proton translocation (for every two electrons transferred, four hydrogen ions are translocated across the cytoplasmic membrane), and thus conserves the redox energy in a proton gradient. This is NADH-quinone oxidoreductase subunit K from Bdellovibrio bacteriovorus (strain ATCC 15356 / DSM 50701 / NCIMB 9529 / HD100).